The primary structure comprises 302 residues: Pantothenate synthetase 4 (302 aa).

51 to 58 contacts ATP; that stretch reads MGALHEGH. His58 serves as the catalytic Proton donor. Gln82 is a binding site for (R)-pantoate. Gln82 contributes to the beta-alanine binding site. 166-169 is a binding site for ATP; it reads GRKD. Gln172 serves as a coordination point for (R)-pantoate. Residues Ala195 and 203–206 each bind ATP; that span reads RSSR.

It belongs to the pantothenate synthetase family. As to quaternary structure, homodimer.

It localises to the cytoplasm. The enzyme catalyses (R)-pantoate + beta-alanine + ATP = (R)-pantothenate + AMP + diphosphate + H(+). Its pathway is cofactor biosynthesis; (R)-pantothenate biosynthesis; (R)-pantothenate from (R)-pantoate and beta-alanine: step 1/1. Its function is as follows. Catalyzes the condensation of pantoate with beta-alanine in an ATP-dependent reaction via a pantoyl-adenylate intermediate. This chain is Pantothenate synthetase 4, found in Frankia alni (strain DSM 45986 / CECT 9034 / ACN14a).